A 299-amino-acid chain; its full sequence is tRNA dimethylallyltransferase (299 aa).

11–18 (GPTAVGKT) is an ATP binding site. 13–18 (TAVGKT) lines the substrate pocket. The interaction with substrate tRNA stretch occupies residues 36-39 (DSQQ).

Belongs to the IPP transferase family. As to quaternary structure, monomer. Mg(2+) is required as a cofactor.

It catalyses the reaction adenosine(37) in tRNA + dimethylallyl diphosphate = N(6)-dimethylallyladenosine(37) in tRNA + diphosphate. Catalyzes the transfer of a dimethylallyl group onto the adenine at position 37 in tRNAs that read codons beginning with uridine, leading to the formation of N6-(dimethylallyl)adenosine (i(6)A). This chain is tRNA dimethylallyltransferase, found in Streptococcus pyogenes serotype M4 (strain MGAS10750).